The primary structure comprises 551 residues: Trigger factor (551 aa).

The PPIase FKBP-type domain maps to 165-250 (GDLVVLDFAG…ATDVRVPGET (86 aa)). A disordered region spans residues 442 to 551 (ADDDTIGKGH…APAKKKAAAE (110 aa)). The segment covering 458-472 (GHDHHDHDHDHDHAA) has biased composition (basic and acidic residues). The segment covering 513–541 (EAAPAPKKAPAKKAAAAKAEEAPAAAPKK) has biased composition (low complexity). Positions 542–551 (APAKKKAAAE) are enriched in basic residues.

The protein belongs to the FKBP-type PPIase family. Tig subfamily.

Its subcellular location is the cytoplasm. It catalyses the reaction [protein]-peptidylproline (omega=180) = [protein]-peptidylproline (omega=0). Involved in protein export. Acts as a chaperone by maintaining the newly synthesized protein in an open conformation. Functions as a peptidyl-prolyl cis-trans isomerase. The polypeptide is Trigger factor (Rhizorhabdus wittichii (strain DSM 6014 / CCUG 31198 / JCM 15750 / NBRC 105917 / EY 4224 / RW1) (Sphingomonas wittichii)).